Here is a 296-residue protein sequence, read N- to C-terminus: 4-hydroxybenzoate octaprenyltransferase (296 aa).

8 helical membrane passes run I29–A49, L52–I72, A102–A122, Y146–A166, G169–Y189, V219–F239, L241–W261, and F275–V295.

Belongs to the UbiA prenyltransferase family. Mg(2+) is required as a cofactor.

It localises to the cell inner membrane. It carries out the reaction all-trans-octaprenyl diphosphate + 4-hydroxybenzoate = 4-hydroxy-3-(all-trans-octaprenyl)benzoate + diphosphate. Its pathway is cofactor biosynthesis; ubiquinone biosynthesis. Its function is as follows. Catalyzes the prenylation of para-hydroxybenzoate (PHB) with an all-trans polyprenyl group. Mediates the second step in the final reaction sequence of ubiquinone-8 (UQ-8) biosynthesis, which is the condensation of the polyisoprenoid side chain with PHB, generating the first membrane-bound Q intermediate 3-octaprenyl-4-hydroxybenzoate. The sequence is that of 4-hydroxybenzoate octaprenyltransferase from Pseudomonas syringae pv. syringae (strain B728a).